Consider the following 414-residue polypeptide: Isocitrate dehydrogenase [NADP] cytoplasmic (414 aa).

Position 2 is an N-acetylserine (Ser2). Tyr42 bears the Phosphotyrosine mark. 75–77 (TIT) is an NADP(+) binding site. Thr77 lines the substrate pocket. Lys81 is subject to N6-acetyllysine. Residue Arg82 coordinates NADP(+). Substrate is bound by residues 94 to 100 (SPNGTIR) and Arg109. Lys126 carries the post-translational modification N6-succinyllysine. Substrate-binding residues include Arg132 and Lys212. N6-acetyllysine is present on residues Lys224, Lys233, and Lys243. Residue Asp252 participates in Mn(2+) binding. Lys260 contacts NADP(+). Asp275 and Asp279 together coordinate Mn(2+). NADP(+) is bound at residue 310–315 (GTVTRH). Lys321 bears the N6-acetyllysine mark. Asn328 provides a ligand contact to NADP(+). At Ser389 the chain carries Phosphoserine. Position 400 is an N6-succinyllysine (Lys400).

This sequence belongs to the isocitrate and isopropylmalate dehydrogenases family. In terms of assembly, homodimer. Mg(2+) serves as cofactor. Mn(2+) is required as a cofactor. In terms of processing, the N-terminus is blocked. Post-translationally, acetylation at Lys-374 dramatically reduces catalytic activity. In terms of tissue distribution, ubiquitous.

Its subcellular location is the cytoplasm. The protein localises to the cytosol. The protein resides in the peroxisome. It catalyses the reaction D-threo-isocitrate + NADP(+) = 2-oxoglutarate + CO2 + NADPH. Catalyzes the NADP(+)-dependent oxidative decarboxylation of isocitrate (D-threo-isocitrate) to 2-ketoglutarate (2-oxoglutarate), which is required by other enzymes such as the phytanoyl-CoA dioxygenase. Plays a critical role in the generation of NADPH, an important cofactor in many biosynthesis pathways. May act as a corneal epithelial crystallin and may be involved in maintaining corneal epithelial transparency. The polypeptide is Isocitrate dehydrogenase [NADP] cytoplasmic (Idh1) (Rattus norvegicus (Rat)).